The sequence spans 380 residues: Enoyl-[acyl-carrier-protein] reductase, mitochondrial (380 aa).

The N-terminal 9 residues, 1–9 (MLPTFKRYM), are a transit peptide targeting the mitochondrion. Tyr73 functions as the Proton donor in the catalytic mechanism. NADP(+)-binding positions include Asn157, 185 to 188 (TSSV), 208 to 210 (RDR), 283 to 286 (YGGM), and 308 to 310 (YWV). At Ser339 the chain carries Phosphoserine. Residue Lys373 coordinates NADP(+).

Belongs to the zinc-containing alcohol dehydrogenase family. Quinone oxidoreductase subfamily. In terms of assembly, homodimer or in a complex with other proteins. Interacts with ARS1.

The protein resides in the mitochondrion matrix. The catalysed reaction is a 2,3-saturated acyl-[ACP] + NADP(+) = a (2E)-enoyl-[ACP] + NADPH + H(+). It carries out the reaction (2E,4E)-hexadienoyl-CoA + NADPH + H(+) = (4E)-hexenoyl-CoA + NADP(+). It catalyses the reaction (2E)-hexenoyl-CoA + NADPH + H(+) = hexanoyl-CoA + NADP(+). Functionally, catalyzes the NADPH-dependent reduction of trans-2-enoyl thioesters in mitochondrial fatty acid synthesis (fatty acid synthesis type II). Fatty acid chain elongation in mitochondria uses acyl carrier protein (ACP) as an acyl group carrier, but the enzyme accepts both ACP and CoA thioesters as substrates in vitro. Required for respiration and the maintenance of the mitochondrial compartment. In Saccharomyces cerevisiae (strain ATCC 204508 / S288c) (Baker's yeast), this protein is Enoyl-[acyl-carrier-protein] reductase, mitochondrial (ETR1).